The following is a 529-amino-acid chain: Low affinity inorganic phosphate transporter 5 (529 aa).

Residues 1–21 (MASNNLNVLNALDTAHTQWYH) are Cytoplasmic-facing. The helical transmembrane segment at 22–42 (VTAVVIAGMGFFTDAYDLFCI) threads the bilayer. At 43 to 71 (STISKLLGRLYYYDPHTHAPGKLPHTVNN) the chain is on the extracellular side. A helical membrane pass occupies residues 72–92 (WVTGVALVGTLTGQLVFGWLG). Over 93 to 99 (DKLGRKK) the chain is Cytoplasmic. Residues 100–120 (VYGLTLILMVICALSSGLSFG) form a helical membrane-spanning segment. The Extracellular portion of the chain corresponds to 121–124 (YSRK). Residues 125 to 145 (VVIGTLCFFRFWLGFGIGGDY) form a helical membrane-spanning segment. The Cytoplasmic portion of the chain corresponds to 146–163 (PLSATIMSEYANKRTRGA). A helical transmembrane segment spans residues 164 to 184 (FIAAVFAMQGVGIIFAGLVLM). The Extracellular segment spans residues 185–211 (TVSKVFLMRYAGKAFSTDEVFSTEPEA). The chain crosses the membrane as a helical span at residues 212–232 (DYVWRIVLMLGALPALLTYYW). At 233–291 (RMKMPETGRYTAIIEGNAKQAAIDMGKVLEIEIQAEGEKLAKFKSANDYSLLSNEFFQR) the chain is on the cytoplasmic side. A helical transmembrane segment spans residues 292–312 (HGLHLIGTMSTWFLLDIAFYS). Topologically, residues 313 to 344 (QNLTQKDIFPTMGLVSDAKSISALREMFETSR) are extracellular. An N-linked (GlcNAc...) asparagine glycan is attached at N314. The chain crosses the membrane as a helical span at residues 345 to 365 (AMFVIALLGTFPGYWFTVFFI). At 366–374 (EKIGRFKIQ) the chain is on the cytoplasmic side. A helical transmembrane segment spans residues 375-395 (LMGFFMMSIFMAIIGVRYDYL). Residues 396 to 405 (KTKDHKWTFA) are Extracellular-facing. A helical transmembrane segment spans residues 406 to 426 (ALYGLTFFFANSGPNSTTFVL). The Cytoplasmic portion of the chain corresponds to 427–472 (PAELFPTRVRSTCHALSAASGKAGAMVSAFGVQQYTQDGEVHKIKK). Residues 473-493 (AMLFLAFTNMVGFCCTFLVTE) traverse the membrane as a helical segment. The Extracellular segment spans residues 494–529 (TKGRSLEEISGEDENQNETKMKGRPVSGGHQDDGWD). Positions 500-529 (EEISGEDENQNETKMKGRPVSGGHQDDGWD) are disordered. N510 carries an N-linked (GlcNAc...) asparagine glycan.

It belongs to the major facilitator superfamily. Phosphate:H(+) symporter (TC 2.A.1.9) family. As to expression, expressed at low levels in non-mycorrhized roots.

The protein localises to the cell membrane. It catalyses the reaction phosphate(in) + H(+)(in) = phosphate(out) + H(+)(out). In terms of biological role, low-affinity transporter for external inorganic phosphate (Pi) probably involved in the acquisition of phosphate released by arbuscular mycorrhizal (AM) fungi during AM symbiosis. The protein is Low affinity inorganic phosphate transporter 5 of Petunia hybrida (Petunia).